Consider the following 371-residue polypeptide: Aminomethyltransferase (371 aa).

It belongs to the GcvT family. As to quaternary structure, the glycine cleavage system is composed of four proteins: P, T, L and H.

The catalysed reaction is N(6)-[(R)-S(8)-aminomethyldihydrolipoyl]-L-lysyl-[protein] + (6S)-5,6,7,8-tetrahydrofolate = N(6)-[(R)-dihydrolipoyl]-L-lysyl-[protein] + (6R)-5,10-methylene-5,6,7,8-tetrahydrofolate + NH4(+). In terms of biological role, the glycine cleavage system catalyzes the degradation of glycine. This Leptospira borgpetersenii serovar Hardjo-bovis (strain JB197) protein is Aminomethyltransferase.